A 122-amino-acid polypeptide reads, in one-letter code: Large ribosomal subunit protein uL14 (122 aa).

Belongs to the universal ribosomal protein uL14 family. Part of the 50S ribosomal subunit. Forms a cluster with proteins L3 and L19. In the 70S ribosome, L14 and L19 interact and together make contacts with the 16S rRNA in bridges B5 and B8.

Its function is as follows. Binds to 23S rRNA. Forms part of two intersubunit bridges in the 70S ribosome. This Nitrosomonas europaea (strain ATCC 19718 / CIP 103999 / KCTC 2705 / NBRC 14298) protein is Large ribosomal subunit protein uL14.